Here is an 89-residue protein sequence, read N- to C-terminus: Small ribosomal subunit protein bS20 (89 aa).

Belongs to the bacterial ribosomal protein bS20 family.

Functionally, binds directly to 16S ribosomal RNA. This is Small ribosomal subunit protein bS20 from Wolbachia pipientis subsp. Culex pipiens (strain wPip).